A 385-amino-acid chain; its full sequence is MSSAATSGEYWLISVPGEKGANDAWDKLNRATGNISTNSKYLIPDLKVGTLDQLVGLSDDLSKLDTSAEGVIRKLVQYFTEVLEEDKSKIAENLVIGNKDMKTYVTKFQWEGAKYPLKQSLKVLSEIIGKQITQIDNDLKMKSLAYNNLKNALASMDRKTTGSLLTKDLADLVKAEDFVLNSEYLQTIIVVVPKILVKEWETKYATLSSMVVPGSSKLLTEEGEHALYTVTLFKKVIDEFKNIARENKFIVRDFVYDEETLKAGRTERDKLLAEKQKQYAPLIRWLKINFGEIFSAYIHIKALRVFVESVLRYGLPVNFQAAVIEPAKGQSKKLRQELQKLYIHLDGSAAGPIDTLEDSPALMSLGVNEYYPYVFFKLNIDFSNK.

This sequence belongs to the V-ATPase C subunit family. As to quaternary structure, V-ATPase is a heteromultimeric enzyme made up of two complexes: the ATP-hydrolytic V1 complex and the proton translocation V0 complex. The V1 complex consists of three catalytic AB heterodimers that form a heterohexamer, three peripheral stalks each consisting of EG heterodimers, one central rotor including subunits D and F, and the regulatory subunits C and H. The proton translocation complex V0 consists of the proton transport subunit a, a ring of proteolipid subunits c9c'', rotary subunit d, subunits e and f, and the accessory subunits vah-19/Ac45 and vah-20/PRR. Interacts with V-type proton ATPase subunits a1 unc-32, a2 vha-5 and a3 vha-6.

Its subcellular location is the cytoplasm. It localises to the membrane. Subunit of the V1 complex of vacuolar(H+)-ATPase (V-ATPase), a multisubunit enzyme composed of a peripheral complex (V1) that hydrolyzes ATP and a membrane integral complex (V0) that translocates protons. V-ATPase is responsible for acidifying and maintaining the pH of intracellular compartments and in some cell types, is targeted to the plasma membrane, where it is responsible for acidifying the extracellular environment. Subunit C is necessary for the assembly of the catalytic sector of the enzyme and is likely to have a specific function in its catalytic activity. Has roles in embryogenesis and ovulation. This is V-type proton ATPase subunit C from Caenorhabditis briggsae.